Here is an 87-residue protein sequence, read N- to C-terminus: DNA-directed RNA polymerase subunit Rpo5 (87 aa).

It belongs to the archaeal Rpo5/eukaryotic RPB5 RNA polymerase subunit family. In terms of assembly, part of the RNA polymerase complex.

It localises to the cytoplasm. It catalyses the reaction RNA(n) + a ribonucleoside 5'-triphosphate = RNA(n+1) + diphosphate. In terms of biological role, DNA-dependent RNA polymerase (RNAP) catalyzes the transcription of DNA into RNA using the four ribonucleoside triphosphates as substrates. This is DNA-directed RNA polymerase subunit Rpo5 from Thermoplasma volcanium (strain ATCC 51530 / DSM 4299 / JCM 9571 / NBRC 15438 / GSS1).